We begin with the raw amino-acid sequence, 493 residues long: Glutamyl-tRNA(Gln) amidotransferase subunit A (493 aa).

Catalysis depends on charge relay system residues lysine 79 and serine 159. The Acyl-ester intermediate role is filled by serine 183.

Belongs to the amidase family. GatA subfamily. Heterotrimer of A, B and C subunits.

It catalyses the reaction L-glutamyl-tRNA(Gln) + L-glutamine + ATP + H2O = L-glutaminyl-tRNA(Gln) + L-glutamate + ADP + phosphate + H(+). Functionally, allows the formation of correctly charged Gln-tRNA(Gln) through the transamidation of misacylated Glu-tRNA(Gln) in organisms which lack glutaminyl-tRNA synthetase. The reaction takes place in the presence of glutamine and ATP through an activated gamma-phospho-Glu-tRNA(Gln). The sequence is that of Glutamyl-tRNA(Gln) amidotransferase subunit A from Allorhizobium ampelinum (strain ATCC BAA-846 / DSM 112012 / S4) (Agrobacterium vitis (strain S4)).